Here is a 299-residue protein sequence, read N- to C-terminus: Mimecan (299 aa).

A signal peptide spans 1–19 (MKTLQSTLLLFLFVPLIKP). Asn-89 is a glycosylation site (N-linked (GlcNAc...) (keratan sulfate) asparagine). LRR repeat units lie at residues 113 to 132 (DAVP…FNKI), 133 to 156 (KKLT…GNLI), 157 to 180 (EDIE…ENQL), 181 to 200 (LKLP…YNKI), 201 to 226 (KSRG…HNAL), 227 to 247 (ESVP…FNNI), and 248 to 278 (TSIT…GNPV). Residue Asn-215 is glycosylated (N-linked (GlcNAc...) (keratan sulfate) asparagine). N-linked (GlcNAc...) asparagine glycosylation occurs at Asn-246. The cysteines at positions 256 and 289 are disulfide-linked. Asn-259 carries N-linked (GlcNAc...) (keratan sulfate) asparagine glycosylation.

This sequence belongs to the small leucine-rich proteoglycan (SLRP) family. SLRP class III subfamily. Post-translationally, contains keratan sulfate. Keratan sulfate attachment is observed in the cornea but the protein also exists in other tissues without keratan sulfate. The 12 kDa OIF in bone and the 25 kDa KSPG25 protein in cornea are probably proteolytic fragments. As to expression, bone and cornea.

It localises to the secreted. Its subcellular location is the extracellular space. The protein resides in the extracellular matrix. In terms of biological role, induces bone formation in conjunction with TGF-beta-1 or TGF-beta-2. The protein is Mimecan (OGN) of Bos taurus (Bovine).